A 367-amino-acid polypeptide reads, in one-letter code: Peptidyl-prolyl cis-trans isomerase D (367 aa).

Residues 7–171 (FFEVAIGGKT…QPVTIVDCGE (165 aa)) enclose the PPIase cyclophilin-type domain. TPR repeat units lie at residues 213–246 (IEKL…LEDY), 264–297 (ISCY…ETVA), and 302–335 (AKAL…EPAD).

Belongs to the cyclophilin-type PPIase family. PPIase D subfamily.

It is found in the cytoplasm. It catalyses the reaction [protein]-peptidylproline (omega=180) = [protein]-peptidylproline (omega=0). Functionally, PPIases accelerate the folding of proteins. It catalyzes the cis-trans isomerization of proline imidic peptide bonds in oligopeptides. This is Peptidyl-prolyl cis-trans isomerase D (CPR6) from Yarrowia lipolytica (strain CLIB 122 / E 150) (Yeast).